Consider the following 610-residue polypeptide: Protein mono-ADP-ribosyltransferase PARP6 (610 aa).

Positions 374-600 (EMTQGSYLEI…QDPKIQKEIM (227 aa)) constitute a PARP catalytic domain. Asp-580 is modified (ADP-ribosyl aspartic acid).

It belongs to the ARTD/PARP family. Post-translationally, auto-mono-ADP-ribosylated.

It catalyses the reaction L-aspartyl-[protein] + NAD(+) = 4-O-(ADP-D-ribosyl)-L-aspartyl-[protein] + nicotinamide. It carries out the reaction L-cysteinyl-[protein] + NAD(+) = S-(ADP-D-ribosyl)-L-cysteinyl-[protein] + nicotinamide + H(+). In terms of biological role, mono-ADP-ribosyltransferase that mediates mono-ADP-ribosylation of target proteins. The protein is Protein mono-ADP-ribosyltransferase PARP6 of Pongo abelii (Sumatran orangutan).